A 250-amino-acid polypeptide reads, in one-letter code: MINLKIEENVKESQNVNTLYFNWDQDIRPGQFAMIWIPGYGEIPMSFSGLGRRKSITVKAYGSASRKLTELKAGDDLFLRGPYGNGFDVREGRKLLVGGGSGIVSLYPIADQETDALISAKTRDELIFKDRFPESRRFIATDDGSDGFHGFAHELLQRINIDSYEAIYVCGPEQMMYKVLQVLKGRKVFVQFSLERTMKCGIGICDSCSLGGKQVCKEGPVFNIEELIGNPEFGVYRTTYSGRRIRLNVK.

One can recognise an FAD-binding FR-type domain in the interval 1-89 (MINLKIEENV…RGPYGNGFDV (89 aa)). Positions 200, 205, 208, and 216 each coordinate [2Fe-2S] cluster.

It belongs to the PyrK family. As to quaternary structure, heterotetramer of 2 PyrK and 2 PyrD type B subunits. [2Fe-2S] cluster serves as cofactor. Requires FAD as cofactor.

Its pathway is pyrimidine metabolism; UMP biosynthesis via de novo pathway; orotate from (S)-dihydroorotate (NAD(+) route): step 1/1. In terms of biological role, responsible for channeling the electrons from the oxidation of dihydroorotate from the FMN redox center in the PyrD type B subunit to the ultimate electron acceptor NAD(+). The protein is Probable dihydroorotate dehydrogenase B (NAD(+)), electron transfer subunit of Thermoplasma volcanium (strain ATCC 51530 / DSM 4299 / JCM 9571 / NBRC 15438 / GSS1).